Consider the following 1381-residue polypeptide: DNA-directed RNA polymerase subunit beta (1381 aa).

It belongs to the RNA polymerase beta chain family. As to quaternary structure, the RNAP catalytic core consists of 2 alpha, 1 beta, 1 beta' and 1 omega subunit. When a sigma factor is associated with the core the holoenzyme is formed, which can initiate transcription.

It carries out the reaction RNA(n) + a ribonucleoside 5'-triphosphate = RNA(n+1) + diphosphate. In terms of biological role, DNA-dependent RNA polymerase catalyzes the transcription of DNA into RNA using the four ribonucleoside triphosphates as substrates. The protein is DNA-directed RNA polymerase subunit beta of Sulfurimonas denitrificans (strain ATCC 33889 / DSM 1251) (Thiomicrospira denitrificans (strain ATCC 33889 / DSM 1251)).